A 549-amino-acid polypeptide reads, in one-letter code: Glucose-6-phosphate isomerase (549 aa).

E355 serves as the catalytic Proton donor. Active-site residues include H387 and K515.

It belongs to the GPI family.

The protein resides in the cytoplasm. It carries out the reaction alpha-D-glucose 6-phosphate = beta-D-fructose 6-phosphate. It participates in carbohydrate biosynthesis; gluconeogenesis. The protein operates within carbohydrate degradation; glycolysis; D-glyceraldehyde 3-phosphate and glycerone phosphate from D-glucose: step 2/4. Its function is as follows. Catalyzes the reversible isomerization of glucose-6-phosphate to fructose-6-phosphate. In Mannheimia succiniciproducens (strain KCTC 0769BP / MBEL55E), this protein is Glucose-6-phosphate isomerase.